The sequence spans 279 residues: Ribose-phosphate pyrophosphokinase (279 aa).

ATP contacts are provided by residues 31 to 33 and 88 to 89; these read DGE and RQ. Positions 121 and 159 each coordinate Mg(2+). Residue K182 is part of the active site. Residues R184, D208, and 212-216 each bind D-ribose 5-phosphate; that span reads STGGT.

It belongs to the ribose-phosphate pyrophosphokinase family. Class III (archaeal) subfamily. Mg(2+) serves as cofactor.

The protein resides in the cytoplasm. The enzyme catalyses D-ribose 5-phosphate + ATP = 5-phospho-alpha-D-ribose 1-diphosphate + AMP + H(+). Its pathway is metabolic intermediate biosynthesis; 5-phospho-alpha-D-ribose 1-diphosphate biosynthesis; 5-phospho-alpha-D-ribose 1-diphosphate from D-ribose 5-phosphate (route I): step 1/1. In terms of biological role, involved in the biosynthesis of the central metabolite phospho-alpha-D-ribosyl-1-pyrophosphate (PRPP) via the transfer of pyrophosphoryl group from ATP to 1-hydroxyl of ribose-5-phosphate (Rib-5-P). The polypeptide is Ribose-phosphate pyrophosphokinase (Pyrococcus furiosus (strain ATCC 43587 / DSM 3638 / JCM 8422 / Vc1)).